The chain runs to 311 residues: MGEKVVVLIGPTAVGKTKMSIQLAKRLNGEIINGDSMQVYKGLDIGTAKIRQEETEGIPHHLLDIKEPHESFSVAEFQTLARSLIKDITKRGKLPIIVGGTGLYIQSVIYDYQFSDAPSNDLYRQSLERCSPDELYEQLKQIDPLSAERIHPNNVRRVIRALEIYHCTGKTMTEWLKEQKRQLVYNVALIGLTMEREKLYARINQRVDQMIDQGLIEEVKRLYEQGLRDCQAIQAIGYKELYAYFDGMLTLKEAIEQLKQNSRRYAKRQFTWFRNQMPVQWFDMTDDTIFERRVNEILHYIEGKFHFQSNM.

10–17 (GPTAVGKT) provides a ligand contact to ATP. 12-17 (TAVGKT) serves as a coordination point for substrate. The segment at 35–38 (DSMQ) is interaction with substrate tRNA.

Belongs to the IPP transferase family. Monomer. Requires Mg(2+) as cofactor.

It carries out the reaction adenosine(37) in tRNA + dimethylallyl diphosphate = N(6)-dimethylallyladenosine(37) in tRNA + diphosphate. Its function is as follows. Catalyzes the transfer of a dimethylallyl group onto the adenine at position 37 in tRNAs that read codons beginning with uridine, leading to the formation of N6-(dimethylallyl)adenosine (i(6)A). This chain is tRNA dimethylallyltransferase, found in Anoxybacillus flavithermus (strain DSM 21510 / WK1).